A 109-amino-acid polypeptide reads, in one-letter code: FK506-binding protein (109 aa).

A PPIase FKBP-type domain is found at 20–108; the sequence is GKEITVHYTG…IFEVELLKVY (89 aa).

It belongs to the FKBP-type PPIase family.

The catalysed reaction is [protein]-peptidylproline (omega=180) = [protein]-peptidylproline (omega=0). With respect to regulation, inhibited by FK506. PPIases accelerate the folding of proteins. The polypeptide is FK506-binding protein (fbp) (Neisseria meningitidis serogroup A / serotype 4A (strain DSM 15465 / Z2491)).